The following is a 3432-amino-acid chain: Genome polyprotein (3432 aa).

The segment at 2–15 (TKKPGGPGKNRAIN) is interaction with host EXOC1. Residues 2 to 109 (TKKPGGPGKN…RKQNKRGGNE (108 aa)) lie on the Cytoplasmic side of the membrane. Residues 37–72 (LLDGRGPVRFVLALITFFKFTALAPTKALLGRWKAV) form a hydrophobic; homodimerization of capsid protein C region. Residues 106–127 (GGNEGSIMWLASLAVVIAYAGA) constitute a propeptide, ER anchor for the capsid protein C, removed in mature form by serine protease NS3. The chain crosses the membrane as a helical span at residues 110 to 130 (GSIMWLASLAVVIAYAGAMKL). Topologically, residues 131–253 (SNFQGKLLMT…ATRYLMKTEN (123 aa)) are extracellular. An N-linked (GlcNAc...) asparagine; by host glycan is attached at asparagine 142. A helical membrane pass occupies residues 254-274 (WIIRNPGYAFLAATLGWMLGS). At 275 to 279 (NNGQR) the chain is on the cytoplasmic side. A helical membrane pass occupies residues 280-294 (VVFTILLLLVAPAYS). The Extracellular segment spans residues 295 to 746 (FNCLGMGNRD…QVFGGAFRTL (452 aa)). 6 cysteine pairs are disulfide-bonded: cysteine 297/cysteine 324, cysteine 354/cysteine 410, cysteine 354/cysteine 415, cysteine 368/cysteine 399, cysteine 386/cysteine 410, and cysteine 386/cysteine 415. The interval 392–405 (DRGWGNGCGLFGKG) is fusion peptide. An N-linked (GlcNAc...) asparagine; by host glycan is attached at asparagine 448. 2 cysteine pairs are disulfide-bonded: cysteine 484–cysteine 581 and cysteine 598–cysteine 629. A helical membrane pass occupies residues 747-767 (FGGMSWITQGLMGALLLWMGV). The Cytoplasmic segment spans residues 768–773 (NARDRS). A helical transmembrane segment spans residues 774 to 794 (IALAFLATGGVLVFLATNVHA). At 795 to 1219 (DTGCAIDITR…AFAEANSGGD (425 aa)) the chain is on the extracellular side. Cystine bridges form between cysteine 798–cysteine 809, cysteine 849–cysteine 937, cysteine 973–cysteine 1017, cysteine 1074–cysteine 1123, cysteine 1085–cysteine 1106, and cysteine 1107–cysteine 1110. 2 N-linked (GlcNAc...) asparagine; by host glycosylation sites follow: asparagine 924 and asparagine 1001. A helical transmembrane segment spans residues 1220-1240 (VLHLALIAVFKIQPAFLVMNM). Topologically, residues 1241–1250 (LSTRWTNQEN) are cytoplasmic. A helical transmembrane segment spans residues 1251-1271 (VVLVLGAALFQLASVDLQIGV). Position 1272 (histidine 1272) is a topological domain, lumenal. A helical transmembrane segment spans residues 1273–1293 (GILNAAAIAWMIVRAITFPTT). The Cytoplasmic segment spans residues 1294–1309 (SSVTMPVLALLTPGMR). A helical membrane pass occupies residues 1310–1330 (ALYLDTYRIILLVIGICSLLQ). Topologically, residues 1331-1341 (ERKKTMAKKKG) are lumenal. A helical transmembrane segment spans residues 1342-1362 (AVLLGLALTSTGWFSPTTIAA). The Cytoplasmic portion of the chain corresponds to 1363-1374 (GLMVCNPNKKRG). Residues 1375-1395 (WPATEFLSAVGLMFAIVGGLA) form a helical membrane-spanning segment. The Lumenal segment spans residues 1396-1398 (ELD). The helical transmembrane segment at 1399-1419 (IESMSIPFMLAGLMAVSYVVS) threads the bilayer. The Cytoplasmic segment spans residues 1420–1476 (GKATDMWLERAADISWEMDAAITGSSRRLDVKLDDDGDFHLIDDPGVPWKVWVLRMS). Residues 1427-1466 (LERAADISWEMDAAITGSSRRLDVKLDDDGDFHLIDDPGV) are interacts with and activates NS3 protease. An intramembrane region (helical) is located at residues 1477-1497 (CIGLAALTPWAIVPAAFGYWL). The Cytoplasmic portion of the chain corresponds to 1498–2173 (TLKTTKRGGV…RMALEELPDA (676 aa)). In terms of domain architecture, Peptidase S7 spans 1505–1682 (GGVFWDTPSP…DRQEEPVPEA (178 aa)). Catalysis depends on charge relay system; for serine protease NS3 activity residues histidine 1555, aspartate 1579, and serine 1639. The Helicase ATP-binding domain maps to 1685–1841 (PNMLRKRQMT…DSNAPIHDLQ (157 aa)). The tract at residues 1689-1692 (RKRQ) is important for RNA-binding. 1698 to 1705 (LHPGSGKT) is a binding site for ATP. A DEAH box motif is present at residues 1789-1792 (DEAH). The Helicase C-terminal domain maps to 1852–2017 (GYEWITEYAG…GLVAQLYGPE (166 aa)). The residue at position 1893 (lysine 1893) is an N6-acetyllysine; by host. The segment at 1950 to 1971 (NPSPITSASAAQRRGRVGRNPN) is disordered. Residues 2168 to 2172 (EELPD) form a regulates the ATPase activity of NS3 helicase region. The chain crosses the membrane as a helical span at residues 2174–2194 (LETITLIVAITVMTGGFFLLM). Residues 2195–2199 (MQRKG) are Lumenal-facing. The helical intramembrane region spans 2200–2220 (IGKMGLGALVLTLATFFLWAA). Glutamate 2221 is a topological domain (lumenal). A helical membrane pass occupies residues 2222–2242 (VPGTKIAGTLLIALLLMVVLI). Residues 2243–2257 (PEPEKQRSQTDNQLA) are Cytoplasmic-facing. A helical transmembrane segment spans residues 2258–2278 (VFLICVLTVVGVVAANEYGML). Residues 2279-2311 (EKTKADLKSMFVGKTQASGLTGLPSMALDLRPA) lie on the Lumenal side of the membrane. Positions 2312-2332 (TAWALYGGSTVVLTPLLKHLI) form an intramembrane region, helical. Topologically, residues 2333-2368 (TSEYVTTSLASINSQAGSLFVLPRGVPFTDLDLTVG) are lumenal. Residues 2369–2389 (LVFLGCWGQITLTTFLTAMVL) traverse the membrane as a helical segment. Residues 2390–2444 (ATLHYGYMLPGWQAEALRAAQRRTAAGIMKNAVVDGMVATDVPELERTTPLMQKK) lie on the Cytoplasmic side of the membrane. A helical membrane pass occupies residues 2445-2465 (VGQVLLIGVSVAAFLVNPNVT). Over 2466–2469 (TVRE) the chain is Lumenal. A helical membrane pass occupies residues 2470–2490 (AGVLVTAATLTLWDNGASAVW). Residues 2491-3432 (NSTTATGLCH…DVLIQEDRVI (942 aa)) are Cytoplasmic-facing. An mRNA cap 0-1 NS5-type MT domain is found at 2528–2793 (GRPGGRTLGE…DVNLGSGTRA (266 aa)). Serine 2583 provides a ligand contact to S-adenosyl-L-methionine. Serine 2583 carries the post-translational modification Phosphoserine. Lysine 2588 (for 2'-O-MTase activity) is an active-site residue. S-adenosyl-L-methionine-binding residues include glycine 2613, tryptophan 2614, threonine 2631, lysine 2632, aspartate 2658, and valine 2659. Aspartate 2673 (for 2'-O-MTase activity) is an active-site residue. Isoleucine 2674 contacts S-adenosyl-L-methionine. Catalysis depends on for 2'-O-MTase activity residues lysine 2709 and glutamate 2745. S-adenosyl-L-methionine is bound at residue tyrosine 2747. Zn(2+)-binding residues include glutamate 2967, histidine 2971, cysteine 2976, and cysteine 2979. The 153-residue stretch at 3057 to 3209 (GKMYADDTAG…KPLDDRFATA (153 aa)) folds into the RdRp catalytic domain. Residues histidine 3244, cysteine 3260, and cysteine 3379 each coordinate Zn(2+).

In the N-terminal section; belongs to the class I-like SAM-binding methyltransferase superfamily. mRNA cap 0-1 NS5-type methyltransferase family. As to quaternary structure, homodimer. Interacts (via N-terminus) with host EXOC1 (via C-terminus); this interaction results in EXOC1 degradation through the proteasome degradation pathway. Forms heterodimers with envelope protein E in the endoplasmic reticulum and Golgi. In terms of assembly, homodimer; in the endoplasmic reticulum and Golgi. Interacts with protein prM. Interacts with non-structural protein 1. Interacts with host HSPA5. As to quaternary structure, homodimer; Homohexamer when secreted. Interacts with envelope protein E. NS1 interacts with NS4B. Interacts with host complement protein CFH; this interaction leads to the degradation of C3. Interacts (via N-terminus) with serine protease NS3. In terms of assembly, forms a heterodimer with serine protease NS3. May form homooligomers. As to quaternary structure, forms a heterodimer with NS2B. Interacts with non-structural protein 2A (via N-terminus). Interacts with NS4B. Interacts with unphosphorylated RNA-directed RNA polymerase NS5; this interaction stimulates RNA-directed RNA polymerase NS5 guanylyltransferase activity. Interacts with host ILF2. Interacts with serine protease NS3. In terms of assembly, homodimer. Interacts with host STAT2; this interaction inhibits the phosphorylation of the latter, and, when all viral proteins are present (polyprotein), targets STAT2 for degradation. Interacts with serine protease NS3. It depends on Mn(2+) as a cofactor. Mg(2+) is required as a cofactor. Post-translationally, specific enzymatic cleavages in vivo yield mature proteins. Cleavages in the lumen of endoplasmic reticulum are performed by host signal peptidase, whereas cleavages in the cytoplasmic side are performed by serine protease NS3. Signal cleavage at the 2K-4B site requires a prior NS3 protease-mediated cleavage at the 4A-2K site. Cleaved in post-Golgi vesicles by a host furin, releasing the mature small envelope protein M, and peptide pr. This cleavage is incomplete as up to 30% of viral particles still carry uncleaved prM. In terms of processing, N-glycosylated. Post-translationally, N-glycosylated. The excreted form is glycosylated and this is required for efficient secretion of the protein from infected cells. Acetylated by host KAT5. Acetylation modulates NS3 RNA-binding and unwinding activities and plays an important positive role for viral replication. In terms of processing, phosphorylated on serines residues. This phosphorylation may trigger NS5 nuclear localization.

It localises to the virion. Its subcellular location is the host nucleus. It is found in the host cytoplasm. The protein resides in the host perinuclear region. The protein localises to the secreted. It localises to the virion membrane. Its subcellular location is the host endoplasmic reticulum membrane. It is found in the host cell surface. It carries out the reaction Selective hydrolysis of -Xaa-Xaa-|-Yaa- bonds in which each of the Xaa can be either Arg or Lys and Yaa can be either Ser or Ala.. It catalyses the reaction RNA(n) + a ribonucleoside 5'-triphosphate = RNA(n+1) + diphosphate. The catalysed reaction is a ribonucleoside 5'-triphosphate + H2O = a ribonucleoside 5'-diphosphate + phosphate + H(+). The enzyme catalyses ATP + H2O = ADP + phosphate + H(+). It carries out the reaction a 5'-end (5'-triphosphoguanosine)-ribonucleoside in mRNA + S-adenosyl-L-methionine = a 5'-end (N(7)-methyl 5'-triphosphoguanosine)-ribonucleoside in mRNA + S-adenosyl-L-homocysteine. It catalyses the reaction a 5'-end (N(7)-methyl 5'-triphosphoguanosine)-ribonucleoside in mRNA + S-adenosyl-L-methionine = a 5'-end (N(7)-methyl 5'-triphosphoguanosine)-(2'-O-methyl-ribonucleoside) in mRNA + S-adenosyl-L-homocysteine + H(+). Its function is as follows. Plays a role in virus budding by binding to the cell membrane and gathering the viral RNA into a nucleocapsid that forms the core of a mature virus particle. During virus entry, may induce genome penetration into the host cytoplasm after hemifusion induced by the surface proteins. Can migrate to the cell nucleus where it modulates host functions. Overcomes the anti-viral effects of host EXOC1 by sequestering and degrading the latter through the proteasome degradation pathway. In terms of biological role, inhibits RNA silencing by interfering with host Dicer. Prevents premature fusion activity of envelope proteins in trans-Golgi by binding to envelope protein E at pH 6.0. After virion release in extracellular space, gets dissociated from E dimers. Functionally, acts as a chaperone for envelope protein E during intracellular virion assembly by masking and inactivating envelope protein E fusion peptide. prM is the only viral peptide matured by host furin in the trans-Golgi network probably to avoid catastrophic activation of the viral fusion activity in acidic Golgi compartment prior to virion release. prM-E cleavage is inefficient, and many virions are only partially matured. These uncleaved prM would play a role in immune evasion. Its function is as follows. May play a role in virus budding. Exerts cytotoxic effects by activating a mitochondrial apoptotic pathway through M ectodomain. May display a viroporin activity. In terms of biological role, binds to host cell surface receptor and mediates fusion between viral and cellular membranes. Efficient virus attachment to cell is, at least in part, mediated by host HSPA5. Envelope protein is synthesized in the endoplasmic reticulum in the form of heterodimer with protein prM. They play a role in virion budding in the ER, and the newly formed immature particle is covered with 60 spikes composed of heterodimer between precursor prM and envelope protein E. The virion is transported to the Golgi apparatus where the low pH causes dissociation of PrM-E heterodimers and formation of E homodimers. prM-E cleavage is inefficient, and many virions are only partially matured. These uncleaved prM would play a role in immune evasion. Involved in immune evasion, pathogenesis and viral replication. Once cleaved off the polyprotein, is targeted to three destinations: the viral replication cycle, the plasma membrane and the extracellular compartment. Essential for viral replication. Required for formation of the replication complex and recruitment of other non-structural proteins to the ER-derived membrane structures. Excreted as a hexameric lipoparticle that plays a role against host immune response. Antagonizing the complement function. Binds to the host macrophages and dendritic cells. Inhibits signal transduction originating from Toll-like receptor 3 (TLR3). Functionally, component of the viral RNA replication complex that functions in virion assembly and antagonizes the host alpha/beta interferon antiviral response. Its function is as follows. Required cofactor for the serine protease function of NS3. May have membrane-destabilizing activity and form viroporins. In terms of biological role, displays three enzymatic activities: serine protease, NTPase and RNA helicase. NS3 serine protease, in association with NS2B, performs its autocleavage and cleaves the polyprotein at dibasic sites in the cytoplasm: C-prM, NS2A-NS2B, NS2B-NS3, NS3-NS4A, NS4A-2K and NS4B-NS5. NS3 RNA helicase binds RNA and unwinds dsRNA in the 3' to 5' direction. Regulates the ATPase activity of the NS3 helicase activity. NS4A allows NS3 helicase to conserve energy during unwinding. Functionally, functions as a signal peptide for NS4B and is required for the interferon antagonism activity of the latter. Its function is as follows. Induces the formation of ER-derived membrane vesicles where the viral replication takes place. Inhibits interferon (IFN)-induced host STAT1 phosphorylation and nuclear translocation, thereby preventing the establishment of cellular antiviral state by blocking the IFN-alpha/beta pathway. Inhibits STAT2 translocation in the nucleus after IFN-alpha treatment. In terms of biological role, replicates the viral (+) and (-) RNA genome, and performs the capping of genomes in the cytoplasm. NS5 methylates viral RNA cap at guanine N-7 and ribose 2'-O positions. Besides its role in RNA genome replication, also prevents the establishment of cellular antiviral state by blocking the interferon-alpha/beta (IFN-alpha/beta) signaling pathway. Inhibits host TYK2 and STAT2 phosphorylation, thereby preventing activation of JAK-STAT signaling pathway. This is Genome polyprotein from Ardeidae (herons).